Reading from the N-terminus, the 486-residue chain is ATP synthase subunit beta (486 aa).

G171 to T178 serves as a coordination point for ATP.

This sequence belongs to the ATPase alpha/beta chains family. As to quaternary structure, F-type ATPases have 2 components, CF(1) - the catalytic core - and CF(0) - the membrane proton channel. CF(1) has five subunits: alpha(3), beta(3), gamma(1), delta(1), epsilon(1). CF(0) has three main subunits: a(1), b(2) and c(9-12). The alpha and beta chains form an alternating ring which encloses part of the gamma chain. CF(1) is attached to CF(0) by a central stalk formed by the gamma and epsilon chains, while a peripheral stalk is formed by the delta and b chains.

The protein resides in the cell membrane. It carries out the reaction ATP + H2O + 4 H(+)(in) = ADP + phosphate + 5 H(+)(out). In terms of biological role, produces ATP from ADP in the presence of a proton gradient across the membrane. The catalytic sites are hosted primarily by the beta subunits. The chain is ATP synthase subunit beta from Salinispora tropica (strain ATCC BAA-916 / DSM 44818 / JCM 13857 / NBRC 105044 / CNB-440).